The sequence spans 259 residues: Indole-3-glycerol phosphate synthase (259 aa).

It belongs to the TrpC family.

It carries out the reaction 1-(2-carboxyphenylamino)-1-deoxy-D-ribulose 5-phosphate + H(+) = (1S,2R)-1-C-(indol-3-yl)glycerol 3-phosphate + CO2 + H2O. The protein operates within amino-acid biosynthesis; L-tryptophan biosynthesis; L-tryptophan from chorismate: step 4/5. In Dehalococcoides mccartyi (strain CBDB1), this protein is Indole-3-glycerol phosphate synthase.